A 201-amino-acid chain; its full sequence is Regulator of G-protein signaling 16 (201 aa).

Residues cysteine 2 and cysteine 12 are each lipidated (S-palmitoyl cysteine). In terms of domain architecture, RGS spans serine 64–alanine 180. Tyrosine 167 carries the post-translational modification Phosphotyrosine; by EGFR. Tyrosine 176 is subject to Phosphotyrosine. Residues alanine 181–threonine 201 form a disordered region.

In terms of assembly, interacts with GNAI1 and GNAQ. Interacts with GNAI3, GNAI3 and GNAO1. Palmitoylated on Cys-2 and/or Cys-12. In terms of processing, phosphorylated. Phosphorylation at Tyr-167 by EGFR enhances GTPase accelerating (GAP) activity toward GNAI1. As to expression, retinal; also predominantly expressed in the liver and pituitary.

It is found in the membrane. In terms of biological role, regulates G protein-coupled receptor signaling cascades. Inhibits signal transduction by increasing the GTPase activity of G protein alpha subunits, thereby driving them into their inactive GDP-bound form. Plays an important role in the phototransduction cascade by regulating the lifetime and effective concentration of activated transducin alpha. May regulate extra and intracellular mitogenic signals. The chain is Regulator of G-protein signaling 16 (Rgs16) from Mus musculus (Mouse).